The sequence spans 107 residues: Integration host factor subunit beta (107 aa).

The segment at 76-107 (FVPHFKPGKELRERVDGRAGEPLKADDPDDDR) is disordered. Basic and acidic residues predominate over residues 82 to 101 (PGKELRERVDGRAGEPLKAD).

This sequence belongs to the bacterial histone-like protein family. Heterodimer of an alpha and a beta chain.

Its function is as follows. This protein is one of the two subunits of integration host factor, a specific DNA-binding protein that functions in genetic recombination as well as in transcriptional and translational control. The protein is Integration host factor subunit beta of Burkholderia cenocepacia (strain HI2424).